A 670-amino-acid polypeptide reads, in one-letter code: UvrABC system protein B (670 aa).

The Helicase ATP-binding domain occupies 26 to 183 (EGLENGLAHQ…RRLSELQYSR (158 aa)). 39 to 46 (GVTGSGKT) contributes to the ATP binding site. A Beta-hairpin motif is present at residues 92–115 (YYDYYQPEAYVPSSDTFIEKDASV). The Helicase C-terminal domain maps to 431–597 (QVDDLLSEIR…GLNKKIGDIL (167 aa)). The tract at residues 600 to 620 (GQPSTRGKGKGRGGKVADTNN) is disordered. The UVR domain maps to 630-665 (DQKIRELEAKMYTHAQNLEFEQAAELRDQVHQLRQQ).

It belongs to the UvrB family. In terms of assembly, forms a heterotetramer with UvrA during the search for lesions. Interacts with UvrC in an incision complex.

The protein resides in the cytoplasm. The UvrABC repair system catalyzes the recognition and processing of DNA lesions. A damage recognition complex composed of 2 UvrA and 2 UvrB subunits scans DNA for abnormalities. Upon binding of the UvrA(2)B(2) complex to a putative damaged site, the DNA wraps around one UvrB monomer. DNA wrap is dependent on ATP binding by UvrB and probably causes local melting of the DNA helix, facilitating insertion of UvrB beta-hairpin between the DNA strands. Then UvrB probes one DNA strand for the presence of a lesion. If a lesion is found the UvrA subunits dissociate and the UvrB-DNA preincision complex is formed. This complex is subsequently bound by UvrC and the second UvrB is released. If no lesion is found, the DNA wraps around the other UvrB subunit that will check the other stand for damage. The protein is UvrABC system protein B of Yersinia enterocolitica serotype O:8 / biotype 1B (strain NCTC 13174 / 8081).